The primary structure comprises 33 residues: MSDIN-like toxin proprotein 2 (33 aa).

Positions 1–10 (MSDINATRLP) are excised as a propeptide. A cross-link (cyclopeptide (Ile-Pro)) is located at residues 11–18 (IILAPIIP). Residues 19-33 (CINDDVNSTLTSGER) constitute a propeptide that is removed on maturation.

This sequence belongs to the MSDIN fungal toxin family. Processed by the macrocyclase-peptidase enzyme POPB to yield a toxic cyclic octapeptide. POPB first removes 10 residues from the N-terminus. Conformational trapping of the remaining peptide forces the enzyme to release this intermediate rather than proceed to macrocyclization. The enzyme rebinds the remaining peptide in a different conformation and catalyzes macrocyclization of the N-terminal 8 residues.

Its function is as follows. Probable toxin that belongs to the MSDIN-like toxin family responsible for a large number of food poisoning cases and deaths. This chain is MSDIN-like toxin proprotein 2, found in Amanita phalloides (Death cap).